A 307-amino-acid polypeptide reads, in one-letter code: MHRSGTTMAWNVFKFCTALRGLGSIMILLVLGVVGVTYYAVVLTNYGPALSQGGLDSLAALTILILFHFLLAMLLWSYFSVVFTDPGVVPPNWRPSTDEERGESDPLNSLDFVGLQSDSSSSNPRVRFCRKCNQLKPSRCHHCSVCGRCVLKMDHHCVWVVNCVGALNYKYFLLFLFYTFLETTLVTLVLMPHFIAFFSDEEIPGTPGTLATTFLAFVLNLAFALSVMGFLIMHISLVAGNTTTIEAYEKKTTTKWRYDLGKKKNFEQVFGMDKRYWLIPGYTEEDLRRMPELQGLEYPSKPDFDSQ.

The next 2 helical transmembrane spans lie at 22–42 and 63–83; these read LGSI…YAVV and ILIL…SVVF. The 51-residue stretch at 127-177 folds into the DHHC domain; the sequence is RFCRKCNQLKPSRCHHCSVCGRCVLKMDHHCVWVVNCVGALNYKYFLLFLF. Residue cysteine 157 is the S-palmitoyl cysteine intermediate of the active site. Helical transmembrane passes span 171 to 191 and 213 to 233; these read YFLL…LVLM and TFLA…FLIM.

It belongs to the DHHC palmitoyltransferase family.

Its subcellular location is the golgi apparatus. It is found in the trans-Golgi network membrane. It catalyses the reaction L-cysteinyl-[protein] + hexadecanoyl-CoA = S-hexadecanoyl-L-cysteinyl-[protein] + CoA. Palmitoyl acyltransferase. The polypeptide is Probable protein S-acyltransferase 14 (PAT14) (Arabidopsis thaliana (Mouse-ear cress)).